A 1106-amino-acid polypeptide reads, in one-letter code: DNA polymerase delta catalytic subunit (1106 aa).

Residues 1–28 (MDGKRRPGPGPGVPPKRARGGLWDEDEA) form a disordered region. A Nuclear localization signal motif is present at residues 4 to 19 (KRRPGPGPGVPPKRAR). Arg19 is modified (omega-N-methylarginine). Lys573 is covalently cross-linked (Glycyl lysine isopeptide (Lys-Gly) (interchain with G-Cter in SUMO2)). Cys1011, Cys1014, Cys1025, and Cys1028 together coordinate Zn(2+). The segment at 1011–1028 (CIGCRTVLSHQGAVCKFC) adopts a CysA-type zinc-finger fold. Cys1057, Cys1060, Cys1070, and Cys1075 together coordinate [4Fe-4S] cluster. The CysB motif motif lies at 1057-1075 (CQRCQGSLHEDVICTSRDC).

It belongs to the DNA polymerase type-B family. As to quaternary structure, component of the tetrameric DNA polymerase delta complex (Pol-delta4), which consists of POLD1/p125, POLD2/p50, POLD3/p66/p68 and POLD4/p12, with POLD1 bearing both DNA polymerase and 3' to 5' proofreading exonuclease activities. Within Pol-delta4, directly interacts with POLD2 and POLD4. Following genotoxic stress by DNA-damaging agents, such as ultraviolet light and methyl methanesulfonate, or by replication stress induced by treatment with hydroxyurea or aphidicolin, Pol-delta4 is converted into a trimeric form of the complex (Pol-delta3) by POLD4 degradation. Pol-delta3 is the major form at S phase replication sites and DNA damage sites. POLD1 displays different catalytic properties depending upon the complex it is found in. It exhibits higher proofreading activity and fidelity than Pol-delta4, making it particularly well suited to respond to DNA damage. Directly interacts with PCNA, as do POLD3 and POLD4; this interaction stimulates Pol-delta4 polymerase activity. As POLD2 and POLD4, directly interacts with WRNIP1; this interaction stimulates DNA polymerase delta-mediated DNA synthesis, independently of the presence of PCNA. This stimulation may be due predominantly to an increase of initiation frequency and also to increased processivity. Also observed as a dimeric complex with POLD2 (Pol-delta2). Pol-delta2 is relatively insensitive to the PCNA stimulation (2-5-fold) compared to Pol-delta4 that is stimulated by over 50-fold. Interacts with POLDIP2; this interaction is indirect and most probably mediated through POLD2-binding. Interacts with CIAO1. Interacts with POLDIP2. Interacts with RFC1. [4Fe-4S] cluster is required as a cofactor.

The protein localises to the nucleus. The catalysed reaction is DNA(n) + a 2'-deoxyribonucleoside 5'-triphosphate = DNA(n+1) + diphosphate. Its activity is regulated as follows. Regulated by alteration of quaternary structure. Exhibits burst rates of DNA synthesis are about 5 times faster in the presence of POLD4 (Pol-delta4 complex) than in its absence (Pol-delta3 complex), while the affinity of the enzyme for its DNA and dNTP substrates appears unchanged. The Pol-delta3 complex is more likely to proofread DNA synthesis because it cleaves single-stranded DNA twice as fast and transfers mismatched DNA from the polymerase to the exonuclease sites 9 times faster compared to the Pol-delta3 complex. Pol-delta3 also extends mismatched primers 3 times more slowly in the absence of POLD4. The conversion of Pol-delta4 into Pol-delta3 is induced by genotoxic stress or by replication stress leading POLD4 degradation. Stimulated in the presence of PCNA. This stimulation is further increased in the presence of KCTD13/PDIP1, most probably via direct interaction between KCTD13 and POLD2. Its function is as follows. As the catalytic component of the trimeric (Pol-delta3 complex) and tetrameric DNA polymerase delta complexes (Pol-delta4 complex), plays a crucial role in high fidelity genome replication, including in lagging strand synthesis, and repair. Exhibits both DNA polymerase and 3'- to 5'-exonuclease activities. Requires the presence of accessory proteins POLD2, POLD3 and POLD4 for full activity. Depending upon the absence (Pol-delta3) or the presence of POLD4 (Pol-delta4), displays differences in catalytic activity. Most notably, expresses higher proofreading activity in the context of Pol-delta3 compared with that of Pol-delta4. Although both Pol-delta3 and Pol-delta4 process Okazaki fragments in vitro, Pol-delta3 may be better suited to fulfill this task, exhibiting near-absence of strand displacement activity compared to Pol-delta4 and stalling on encounter with the 5'-blocking oligonucleotides. Pol-delta3 idling process may avoid the formation of a gap, while maintaining a nick that can be readily ligated. Along with DNA polymerase kappa, DNA polymerase delta carries out approximately half of nucleotide excision repair (NER) synthesis following UV irradiation. Under conditions of DNA replication stress, in the presence of POLD3 and POLD4, may catalyze the repair of broken replication forks through break-induced replication (BIR). Involved in the translesion synthesis (TLS) of templates carrying O6-methylguanine, 8oxoG or abasic sites. This is DNA polymerase delta catalytic subunit (POLD1) from Bos taurus (Bovine).